The chain runs to 113 residues: Protein RALF-like 31 (113 aa).

Positions 1 to 21 (MFNSTALVIFAILFLLISADA) are cleaved as a signal peptide. Positions 22–58 (FPIPSPNGEIDAMLIRNSIIGEDEDLMPTEISRRVLM) are cleaved as a propeptide — removed in mature form. 2 disulfides stabilise this stretch: Cys-76/Cys-86 and Cys-98/Cys-104.

Belongs to the plant rapid alkalinization factor (RALF) family. In terms of processing, proteolytically cleaved, probably by S1P, a subtilisin-like serine protease (subtilase).

The protein localises to the secreted. Its function is as follows. Cell signaling peptide that may regulate plant stress, growth, and development. Mediates a rapid alkalinization of extracellular space by mediating a transient increase in the cytoplasmic Ca(2+) concentration leading to a calcium-dependent signaling events through a cell surface receptor and a concomitant activation of some intracellular mitogen-activated protein kinases. This Arabidopsis thaliana (Mouse-ear cress) protein is Protein RALF-like 31 (RALFL31).